We begin with the raw amino-acid sequence, 260 residues long: Snake venom serine protease homolog (260 aa).

Positions M1–A18 are cleaved as a signal peptide. A propeptide spanning residues Q19–L24 is cleaved from the precursor. Positions I25 to A251 constitute a Peptidase S1 domain. Intrachain disulfides connect C31/C165, C52/C68, C100/C258, C144/C212, C176/C191, and C202/C227. N83 is a glycosylation site (N-linked (GlcNAc...) asparagine).

The protein belongs to the peptidase S1 family. Snake venom subfamily. Expressed by the venom gland.

The protein localises to the secreted. In terms of biological role, snake venom serine protease homolog that may act in the hemostasis system of the prey. In Bothrops jararacussu (Jararacussu), this protein is Snake venom serine protease homolog.